The following is a 580-amino-acid chain: Serine/threonine-protein kinase srk1 (580 aa).

A compositionally biased stretch (polar residues) spans 51–61; the sequence is VADSTQNPTSK. The interval 51–91 is disordered; that stretch reads VADSTQNPTSKPKSRHAHFHETVHENPSEYSRSKCKQPTNE. A Protein kinase domain is found at 124–421; it reads YTLLQKMGDG…IHQFLAHPWI (298 aa). ATP contacts are provided by residues 130–138 and Lys153; that span reads MGDGAFSNV. The Proton acceptor role is filled by Asp257. Residues 530-580 form a disordered region; it reads NLSGENDPSLASRQPAQSQQQSSQRSRNKFKGFQLNLSKATLYNRRHRQKV. The segment covering 537–554 has biased composition (low complexity); the sequence is PSLASRQPAQSQQQSSQR.

This sequence belongs to the protein kinase superfamily. CAMK Ser/Thr protein kinase family. CaMK subfamily. Mg(2+) is required as a cofactor. Post-translationally, phosphorylated by sty1.

Its subcellular location is the cytoplasm. The protein localises to the nucleus. It is found in the nucleolus. The protein resides in the spore core. It carries out the reaction L-seryl-[protein] + ATP = O-phospho-L-seryl-[protein] + ADP + H(+). The catalysed reaction is L-threonyl-[protein] + ATP = O-phospho-L-threonyl-[protein] + ADP + H(+). In terms of biological role, delays the mitotic G2/M transition by promoting nuclear exclusion of cdc25. During osmotic stress, inhibits the G2/M transition in a sty1 stress-activated MAPK pathway-dependent manner. This chain is Serine/threonine-protein kinase srk1, found in Schizosaccharomyces pombe (strain 972 / ATCC 24843) (Fission yeast).